The following is a 127-amino-acid chain: Small ribosomal subunit protein uS11 (127 aa).

This sequence belongs to the universal ribosomal protein uS11 family. In terms of assembly, part of the 30S ribosomal subunit. Interacts with proteins S7 and S18. Binds to IF-3.

Functionally, located on the platform of the 30S subunit, it bridges several disparate RNA helices of the 16S rRNA. Forms part of the Shine-Dalgarno cleft in the 70S ribosome. This Ruthia magnifica subsp. Calyptogena magnifica protein is Small ribosomal subunit protein uS11.